The following is a 417-amino-acid chain: Serine--tRNA ligase (417 aa).

226–228 contacts L-serine; the sequence is TSE. ATP-binding positions include 257 to 259 and Val273; that span reads RRE. Glu280 provides a ligand contact to L-serine. Position 344-347 (344-347) interacts with ATP; the sequence is ELTS. Residue Thr379 participates in L-serine binding.

This sequence belongs to the class-II aminoacyl-tRNA synthetase family. Type-1 seryl-tRNA synthetase subfamily. As to quaternary structure, homodimer. The tRNA molecule binds across the dimer.

It is found in the cytoplasm. It catalyses the reaction tRNA(Ser) + L-serine + ATP = L-seryl-tRNA(Ser) + AMP + diphosphate + H(+). It carries out the reaction tRNA(Sec) + L-serine + ATP = L-seryl-tRNA(Sec) + AMP + diphosphate + H(+). Its pathway is aminoacyl-tRNA biosynthesis; selenocysteinyl-tRNA(Sec) biosynthesis; L-seryl-tRNA(Sec) from L-serine and tRNA(Sec): step 1/1. Functionally, catalyzes the attachment of serine to tRNA(Ser). Is also able to aminoacylate tRNA(Sec) with serine, to form the misacylated tRNA L-seryl-tRNA(Sec), which will be further converted into selenocysteinyl-tRNA(Sec). The chain is Serine--tRNA ligase from Mycobacterium sp. (strain JLS).